A 117-amino-acid chain; its full sequence is Alpha-endosulfine (117 aa).

The segment at 1–53 (MAAPLGTGARAEDSGQEKQDSQEKETVIPERAEEAKLKAKYPNLGQKPGGSDF) is disordered. The span at 10–37 (RAEDSGQEKQDSQEKETVIPERAEEAKL) shows a compositional bias: basic and acidic residues. At S67 the chain carries Phosphoserine; by GWL. Residues 76-117 (KMKNKQLPTAGPDKNLVTGDHIPKPQDLPQRKSSLVASKLAG) are disordered.

It belongs to the endosulfine family. Post-translationally, phosphorylation at Ser-67 by GWL during mitosis is essential for interaction with PPP2R2D (PR55-delta) and subsequent inactivation of PP2A.

Its subcellular location is the cytoplasm. Protein phosphatase inhibitor that specifically inhibits protein phosphatase 2A (PP2A) during mitosis. When phosphorylated at Ser-67 during mitosis, specifically interacts with PPP2R2D (PR55-delta) and inhibits its activity, leading to inactivation of PP2A, an essential condition to keep cyclin-B1-CDK1 activity high during M phase. This is Alpha-endosulfine (ENSA) from Gallus gallus (Chicken).